The sequence spans 266 residues: Enterotoxin type C-1 (266 aa).

A signal peptide spans 1 to 27 (MNKSRFISCVILIFALILVLFTPNVLA). Cysteine 120 and cysteine 137 form a disulfide bridge.

Belongs to the staphylococcal/streptococcal toxin family. Interacts with host MHC class II molecules composed of alpha/HLA-DRA and beta/HLA-DRB1 chains.

Its subcellular location is the secreted. Staphylococcal enterotoxin that activates the host immune system by binding as unprocessed molecules to major histocompatibility (MHC) complex class II and T-cell receptor (TCR) molecules. In turn, this ternary complex activates a large number of T-lymphocytes initiating a systemic release of pro-inflammatory cytokines. Inhibits SEC1-mediated T-cell activation in the absence of MHC class II by competing with SEC1 for binding to the host TCR. Also causes the intoxication staphylococcal food poisoning syndrome. In Staphylococcus aureus, this protein is Enterotoxin type C-1 (entC1).